The following is a 146-amino-acid chain: Hemoglobin subunit beta (146 aa).

Valine 1 carries the post-translational modification N-acetylvaline. A Globin domain is found at 2-146; that stretch reads HLTPEEKSAV…VANALAHKYH (145 aa). Residue threonine 12 is modified to Phosphothreonine. Position 44 is a phosphoserine (serine 44). An N6-acetyllysine modification is found at lysine 59. Residue histidine 63 coordinates heme b. Lysine 82 is subject to N6-acetyllysine. Histidine 92 is a heme b binding site. Residue cysteine 93 is modified to S-nitrosocysteine. Lysine 144 bears the N6-acetyllysine mark.

This sequence belongs to the globin family. In terms of assembly, heterotetramer of two alpha chains and two beta chains. Red blood cells.

Its function is as follows. Involved in oxygen transport from the lung to the various peripheral tissues. The protein is Hemoglobin subunit beta (HBB) of Hylobates lar (Lar gibbon).